Reading from the N-terminus, the 433-residue chain is Enolase (433 aa).

A (2R)-2-phosphoglycerate-binding site is contributed by Gln167. Glu209 (proton donor) is an active-site residue. Residues Asp246, Glu291, and Asp318 each contribute to the Mg(2+) site. Lys343, Arg372, Ser373, and Lys394 together coordinate (2R)-2-phosphoglycerate. Lys343 (proton acceptor) is an active-site residue.

This sequence belongs to the enolase family. As to quaternary structure, component of the RNA degradosome, a multiprotein complex involved in RNA processing and mRNA degradation. Mg(2+) is required as a cofactor.

Its subcellular location is the cytoplasm. It is found in the secreted. The protein localises to the cell surface. It catalyses the reaction (2R)-2-phosphoglycerate = phosphoenolpyruvate + H2O. Its pathway is carbohydrate degradation; glycolysis; pyruvate from D-glyceraldehyde 3-phosphate: step 4/5. Its function is as follows. Catalyzes the reversible conversion of 2-phosphoglycerate (2-PG) into phosphoenolpyruvate (PEP). It is essential for the degradation of carbohydrates via glycolysis. In Photorhabdus laumondii subsp. laumondii (strain DSM 15139 / CIP 105565 / TT01) (Photorhabdus luminescens subsp. laumondii), this protein is Enolase.